We begin with the raw amino-acid sequence, 288 residues long: Pirin-like protein CC_3178 (288 aa).

Belongs to the pirin family.

The sequence is that of Pirin-like protein CC_3178 from Caulobacter vibrioides (strain ATCC 19089 / CIP 103742 / CB 15) (Caulobacter crescentus).